The primary structure comprises 274 residues: MSQIKPSRLSSSAEIRGARQLDVLQRHKLAEPQQDWLAEEVPVALVYNGISHVVMMATPKDLAAFALGFSLSEGIISSPQDIYAIEITPGCNGIEVNIELSSRRFAGLKERRRAMAGRTGCGVCGIEQLDDIFRPITPLPFTQAFNLEHLDTALAQLKQVQPVGQLTGCTHAAAWINPEGELLGGCEDVGRHVALDKLLGIRAKQPWQQGAVLVSSRASYEMVQKTAMCGAEILFAVSAATTLAVEVAERCNLTLVGFSKPGRATVYTHPQRIK.

Cys121 (cysteine persulfide intermediate) is an active-site residue. 258-263 (FSKPGR) serves as a coordination point for Mo-bis(molybdopterin guanine dinucleotide).

It belongs to the FdhD family.

The protein localises to the cytoplasm. Required for formate dehydrogenase (FDH) activity. Acts as a sulfur carrier protein that transfers sulfur from IscS to the molybdenum cofactor prior to its insertion into FDH. This chain is Sulfur carrier protein FdhD, found in Yersinia pseudotuberculosis serotype O:3 (strain YPIII).